A 213-amino-acid chain; its full sequence is Imidazole glycerol phosphate synthase subunit HisH 1 (213 aa).

Positions serine 3–isoleucine 213 constitute a Glutamine amidotransferase type-1 domain. The active-site Nucleophile is cysteine 81. Active-site residues include histidine 195 and glutamate 197.

As to quaternary structure, heterodimer of HisH and HisF.

It localises to the cytoplasm. It carries out the reaction 5-[(5-phospho-1-deoxy-D-ribulos-1-ylimino)methylamino]-1-(5-phospho-beta-D-ribosyl)imidazole-4-carboxamide + L-glutamine = D-erythro-1-(imidazol-4-yl)glycerol 3-phosphate + 5-amino-1-(5-phospho-beta-D-ribosyl)imidazole-4-carboxamide + L-glutamate + H(+). The catalysed reaction is L-glutamine + H2O = L-glutamate + NH4(+). It participates in amino-acid biosynthesis; L-histidine biosynthesis; L-histidine from 5-phospho-alpha-D-ribose 1-diphosphate: step 5/9. Functionally, IGPS catalyzes the conversion of PRFAR and glutamine to IGP, AICAR and glutamate. The HisH subunit provides the glutamine amidotransferase activity that produces the ammonia necessary to HisF for the synthesis of IGP and AICAR. In Legionella pneumophila (strain Paris), this protein is Imidazole glycerol phosphate synthase subunit HisH 1.